Consider the following 182-residue polypeptide: Ribosome maturation factor RimM (182 aa).

One can recognise a PRC barrel domain in the interval 103-182 (EDDYYWKDLM…RVEVDWDPGF (80 aa)).

It belongs to the RimM family. As to quaternary structure, binds ribosomal protein uS19.

The protein resides in the cytoplasm. An accessory protein needed during the final step in the assembly of 30S ribosomal subunit, possibly for assembly of the head region. Essential for efficient processing of 16S rRNA. May be needed both before and after RbfA during the maturation of 16S rRNA. It has affinity for free ribosomal 30S subunits but not for 70S ribosomes. The chain is Ribosome maturation factor RimM from Yersinia pestis bv. Antiqua (strain Antiqua).